A 239-amino-acid polypeptide reads, in one-letter code: SKA complex subunit 1 (239 aa).

A disordered region spans residues 87–115 (PDSVPQKSTRPCLDDEKEGSSVVQPPESG). Residues 116–239 (NRHVQLISEQ…RCGPLTFYYA (124 aa)) form a microtubule binding region.

Belongs to the SKA1 family. In terms of assembly, component of the SKA complex, composed of two copies of ska-1 and a single copy of ska-3. The core complex associates with microtubules and may form dimeric assemblies. Interacts with ska-3 and microtubules.

It is found in the cytoplasm. The protein localises to the cytoskeleton. It localises to the spindle. The protein resides in the chromosome. Its subcellular location is the centromere. It is found in the kinetochore. Functionally, component of the SKA complex, a microtubule plus end-binding complex of the outer kinetochore that stabilizes spindle microtubule-kinetochore attachments, promotes alignment of chromosomes at the mitotic spindle equator (chromosome congression) and assists suppression of the spindle assembly checkpoint. Kinetochores, consisting of a centromere-associated inner segment and a microtubule-contacting outer segment, play a crucial role in chromosome segregation by mediating the physical connection between centromeric DNA and spindle microtubules. The outer kinetochore is made up of the ten-subunit KMN network complex, comprising the MIS12, NDC80 and KNL1 complexes, and auxiliary microtubule-associated components such as the SKA complex; together they connect the outer kinetochore with the inner kinetochore, bind microtubules, and mediate interactions with mitotic checkpoint proteins that delay anaphase until chromosomes are bioriented on the spindle. The SKA complex is loaded onto bioriented kinetochores and it facilitates chromosome congression by stabilizing microtubules and end-on attachment of the NDC80 complex to depolymerizing spindle microtubules, thereby assisting the poleward-moving kinetochore in withstanding microtubule pulling forces. The complex associates with dynamic microtubule plus-ends and can track both depolymerizing and elongating microtubules. The complex recruits protein phosphatase 1 (PP1) to the kinetochore in prometaphase and metaphase, to oppose spindle assembly checkpoint signaling and promote the onset of anaphase. In the complex, it mediates interactions with microtubules. During meiosis the SKA complex stabilizes the meiotic spindle and is required for its migration to the cortex. The protein is SKA complex subunit 1 of Caenorhabditis briggsae.